Here is a 305-residue protein sequence, read N- to C-terminus: MVDVDSFVEDARAEISEALGDETAIIALSGGVDSSTAAALAYEAVGDQLVPVYVDTGLMRKGETDEIREVFDYMDSLRVVDASDRFFDELAGVTDPEEKRHAIGEQFIREFETVAEEVDATQLVQGTIYPDRIESEGTIKSHHNVGGLPERVGFEGIVEPMRDLYKDEVREVARHLGLEEIISERMPFPGPGLAVRVIGEVTPEKVAVCREATHIVEDELEAYEPWQAFAAVLGRATGVKGDNRVHGHVVAVRSVESRDGMTARAQELEWETLQRLQSRIAGTIDEVSRVVYDVTHKPPATIEYE.

The region spanning 2 to 185 is the GMPS ATP-PPase domain; the sequence is VDVDSFVEDA…LGLEEIISER (184 aa). 29–35 lines the ATP pocket; it reads SGGVDSS.

Heterodimer composed of a glutamine amidotransferase subunit (A) and a GMP-binding subunit (B).

It carries out the reaction XMP + L-glutamine + ATP + H2O = GMP + L-glutamate + AMP + diphosphate + 2 H(+). It participates in purine metabolism; GMP biosynthesis; GMP from XMP (L-Gln route): step 1/1. Its function is as follows. Catalyzes the synthesis of GMP from XMP. This chain is GMP synthase [glutamine-hydrolyzing] subunit B, found in Halobacterium salinarum (strain ATCC 29341 / DSM 671 / R1).